A 42-amino-acid chain; its full sequence is Large ribosomal subunit protein bL36 (42 aa).

It belongs to the bacterial ribosomal protein bL36 family.

The polypeptide is Large ribosomal subunit protein bL36 (Anaplasma phagocytophilum (strain HZ)).